We begin with the raw amino-acid sequence, 455 residues long: Kynurenine 3-monooxygenase (455 aa).

Belongs to the aromatic-ring hydroxylase family. KMO subfamily. FAD serves as cofactor.

The catalysed reaction is L-kynurenine + NADPH + O2 + H(+) = 3-hydroxy-L-kynurenine + NADP(+) + H2O. It functions in the pathway cofactor biosynthesis; NAD(+) biosynthesis; quinolinate from L-kynurenine: step 1/3. Its function is as follows. Catalyzes the hydroxylation of L-kynurenine (L-Kyn) to form 3-hydroxy-L-kynurenine (L-3OHKyn). Required for synthesis of quinolinic acid. The sequence is that of Kynurenine 3-monooxygenase from Xanthomonas oryzae pv. oryzae (strain MAFF 311018).